A 371-amino-acid polypeptide reads, in one-letter code: Queuine tRNA-ribosyltransferase (371 aa).

Aspartate 89 functions as the Proton acceptor in the catalytic mechanism. Substrate is bound by residues 89–93 (DSGGF), aspartate 143, glutamine 185, and glycine 212. Residues 243-249 (GVGKPED) form an RNA binding region. Catalysis depends on aspartate 262, which acts as the Nucleophile. The segment at 267 to 271 (TRNAR) is RNA binding; important for wobble base 34 recognition. Positions 300, 302, 305, and 331 each coordinate Zn(2+).

It belongs to the queuine tRNA-ribosyltransferase family. As to quaternary structure, homodimer. Within each dimer, one monomer is responsible for RNA recognition and catalysis, while the other monomer binds to the replacement base PreQ1. Zn(2+) is required as a cofactor.

It carries out the reaction 7-aminomethyl-7-carbaguanine + guanosine(34) in tRNA = 7-aminomethyl-7-carbaguanosine(34) in tRNA + guanine. It functions in the pathway tRNA modification; tRNA-queuosine biosynthesis. Its function is as follows. Catalyzes the base-exchange of a guanine (G) residue with the queuine precursor 7-aminomethyl-7-deazaguanine (PreQ1) at position 34 (anticodon wobble position) in tRNAs with GU(N) anticodons (tRNA-Asp, -Asn, -His and -Tyr). Catalysis occurs through a double-displacement mechanism. The nucleophile active site attacks the C1' of nucleotide 34 to detach the guanine base from the RNA, forming a covalent enzyme-RNA intermediate. The proton acceptor active site deprotonates the incoming PreQ1, allowing a nucleophilic attack on the C1' of the ribose to form the product. After dissociation, two additional enzymatic reactions on the tRNA convert PreQ1 to queuine (Q), resulting in the hypermodified nucleoside queuosine (7-(((4,5-cis-dihydroxy-2-cyclopenten-1-yl)amino)methyl)-7-deazaguanosine). The protein is Queuine tRNA-ribosyltransferase of Pseudomonas syringae pv. tomato (strain ATCC BAA-871 / DC3000).